The sequence spans 410 residues: Na(+)/H(+) antiporter NhaS4 (410 aa).

11 consecutive transmembrane segments (helical) span residues 7 to 27 (LLIL…GLLF), 33 to 53 (PPVI…LGLL), 69 to 89 (FLYL…GLEL), 107 to 127 (VSIF…LYSL), 135 to 155 (FIPF…PVLA), 173 to 193 (LTCA…AIAV), 199 to 219 (IFGA…MVTL), 241 to 261 (LLTF…WIGI), 291 to 311 (FVST…TDLG), 319 to 339 (WAVC…GVYV), and 376 to 396 (GVIS…TTII).

Belongs to the monovalent cation:proton antiporter 2 (CPA2) transporter (TC 2.A.37) family.

It localises to the membrane. Its function is as follows. Na(+)/H(+) antiporter. The protein is Na(+)/H(+) antiporter NhaS4 (nhaS4) of Synechocystis sp. (strain ATCC 27184 / PCC 6803 / Kazusa).